The sequence spans 157 residues: Cytochrome c-type biogenesis protein CcmE (157 aa).

Residues Met1–Arg7 lie on the Cytoplasmic side of the membrane. A helical; Signal-anchor for type II membrane protein membrane pass occupies residues Leu8–Ala28. The Periplasmic segment spans residues Phe29 to Arg157. Heme-binding residues include His123 and Tyr127.

The protein belongs to the CcmE/CycJ family.

Its subcellular location is the cell inner membrane. Functionally, heme chaperone required for the biogenesis of c-type cytochromes. Transiently binds heme delivered by CcmC and transfers the heme to apo-cytochromes in a process facilitated by CcmF and CcmH. The polypeptide is Cytochrome c-type biogenesis protein CcmE (Cupriavidus taiwanensis (strain DSM 17343 / BCRC 17206 / CCUG 44338 / CIP 107171 / LMG 19424 / R1) (Ralstonia taiwanensis (strain LMG 19424))).